Reading from the N-terminus, the 352-residue chain is Respiratory nitrate reductase subunit beta (352 aa).

The 4Fe-4S ferredoxin-type 1 domain maps to V20–G48. Positions 29, 32, 35, and 39 each coordinate [4Fe-4S] cluster. 2 disordered regions span residues K63–Y95 and S111–Q131. Over residues S78 to Y95 the composition is skewed to basic and acidic residues. 2 4Fe-4S ferredoxin-type domains span residues S139–E170 and G172–T201. Positions 148, 151, and 156 each coordinate [4Fe-4S] cluster. 3 residues coordinate [3Fe-4S] cluster: C160, C181, and C187. Residues C191, C208, C211, C229, and C233 each coordinate [4Fe-4S] cluster.

Probable multiprotein complex; a catalytic heterodimer of an alpha and beta chain is proposed to associate with additional subunits involved in membrane attachment and electron transfer. [4Fe-4S] cluster serves as cofactor. The cofactor is [3Fe-4S] cluster.

Its subcellular location is the cell membrane. It catalyses the reaction nitrate + a quinol = a quinone + nitrite + H2O. Inhibited by cyanide, azide and antimycin A. Enzyme stability is not dependent on salt concentration. Its function is as follows. The respiratory membrane-bound nitrate reductase enzyme complex plays a role in generation of metabolic energy by using nitrate as a terminal electron acceptor during anaerobic conditions. The beta chain is an electron transfer unit containing four cysteine clusters involved in the formation of iron-sulfur centers. The chain is Respiratory nitrate reductase subunit beta (narH) from Haloferax mediterranei (strain ATCC 33500 / DSM 1411 / JCM 8866 / NBRC 14739 / NCIMB 2177 / R-4) (Halobacterium mediterranei).